The following is a 503-amino-acid chain: Ell-associated factor Eaf (503 aa).

Composition is skewed to polar residues over residues 119–145 (TRNE…NQGA) and 167–186 (ENST…SRRN). Disordered stretches follow at residues 119-220 (TRNE…PAWD), 250-360 (GHAN…SQSV), and 372-503 (GGVL…DDDD). Serine 196 carries the phosphoserine modification. Residues 202 to 215 (SPSRPVPVHRSPQS) show a composition bias toward low complexity. 2 stretches are compositionally biased toward polar residues: residues 250 to 273 (GHAN…STHI) and 298 to 307 (MAQQQQQHPS). Low complexity predominate over residues 308–337 (NYGRGYNGGHNHAQQQQQQQRNSPPRQRPS). The segment covering 385–400 (DSSDSDSGSDSDDSTE) has biased composition (acidic residues). Low complexity-rich tracts occupy residues 406–437 (QGQQ…HHNQ), 454–472 (HQQQ…QKQQ), and 487–497 (LQNDLQLSSNS).

It belongs to the EAF family.

The protein resides in the nucleus. Promotes transcriptional elongation by Su(Tpl)/ELL. Essential for development. The protein is Ell-associated factor Eaf of Drosophila sechellia (Fruit fly).